The sequence spans 422 residues: Retinoic acid receptor RXR-beta-B (422 aa).

A modulating region spans residues 1–89 (MNSLPPSTSA…SGPMLSQKRM (89 aa)). 2 consecutive NR C4-type zinc fingers follow at residues 90 to 110 (CAIC…CEGC) and 126 to 150 (CRDN…YQKC). Residues 90–155 (CAICGDRSSG…RYQKCLAMGM (66 aa)) constitute a DNA-binding region (nuclear receptor). Residues 156–178 (KREAVQEERQKNKERDGDYECSS) form a hinge region. Residues 161–173 (QEERQKNKERDGD) show a composition bias toward basic and acidic residues. The disordered stretch occupies residues 161 to 182 (QEERQKNKERDGDYECSSSANE). In terms of domain architecture, NR LBD spans 181 to 421 (NEEMPVEKIL…TFLMEMLESP (241 aa)).

Belongs to the nuclear hormone receptor family. NR2 subfamily. Homodimer. Heterodimer; with a rar molecule. Binds DNA preferentially as a rar/rxr heterodimer. Heterodimerizes with rarga. In terms of tissue distribution, shows uniform expression from the blastula to mid-gastrula stages. At 12 hours post-fertilization (hpf), expressed ubiquitously but more weakly. At 24 hpf, restricted to the ventral diencephalon, pharangeal endoderm and trunk and tail mesoderm; mesoderm expression is in medial cells of each somite along the dorsoventral axis, forming stripes. At 48 hpf, expressed in forebrain, eye, midbrain and anterior hindbrain.

Its subcellular location is the nucleus. Its function is as follows. Receptor for retinoic acid. Retinoic acid receptors bind as heterodimers to their target response elements in response to their ligands, all-trans or 9-cis retinoic acid, and regulate gene expression in various biological processes. The rar/rxr heterodimers bind to the retinoic acid response elements (RARE) composed of tandem 5'-AGGTCA-3' sites known as DR1-DR5. The high affinity ligand for rxrs is 9-cis retinoic acid. The chain is Retinoic acid receptor RXR-beta-B (rxrbb) from Danio rerio (Zebrafish).